Here is a 448-residue protein sequence, read N- to C-terminus: Ribosomal protein uS12 methylthiotransferase RimO (448 aa).

The 111-residue stretch at 10-120 (PNIGFVSLGC…VMEHVHKYVP (111 aa)) folds into the MTTase N-terminal domain. [4Fe-4S] cluster is bound by residues C19, C55, C84, C152, C156, and C159. A Radical SAM core domain is found at 138–379 (LTPKHYAYLK…MELQQQISAQ (242 aa)). Positions 382–448 (QQKIGKTLPV…ADEYDLWGTC (67 aa)) constitute a TRAM domain.

This sequence belongs to the methylthiotransferase family. RimO subfamily. [4Fe-4S] cluster is required as a cofactor.

The protein resides in the cytoplasm. It catalyses the reaction L-aspartate(89)-[ribosomal protein uS12]-hydrogen + (sulfur carrier)-SH + AH2 + 2 S-adenosyl-L-methionine = 3-methylsulfanyl-L-aspartate(89)-[ribosomal protein uS12]-hydrogen + (sulfur carrier)-H + 5'-deoxyadenosine + L-methionine + A + S-adenosyl-L-homocysteine + 2 H(+). Catalyzes the methylthiolation of an aspartic acid residue of ribosomal protein uS12. The chain is Ribosomal protein uS12 methylthiotransferase RimO from Mannheimia succiniciproducens (strain KCTC 0769BP / MBEL55E).